The primary structure comprises 402 residues: Alkaline proteinase (402 aa).

Residues 1–20 (MVTLRRLAVLLGAIPAALAA) form the signal peptide. The propeptide occupies 21–120 (PTTQKREVVP…EQDEGEFSTA (100 aa)). An Inhibitor I9 domain is found at 32-108 (KYIVTLKEGA…EVEEDQIWHL (77 aa)). Residues 128 to 402 (AWGLGTISHR…NRILYNGNGA (275 aa)) form the Peptidase S8 domain. Residues Asp-160, His-191, and Ser-347 each act as charge relay system in the active site. Residues 382 to 392 (GRVSNPGSGSP) show a composition bias toward polar residues. The disordered stretch occupies residues 382-402 (GRVSNPGSGSPNRILYNGNGA).

Belongs to the peptidase S8 family.

This Hapsidospora chrysogena (Acremonium chrysogenum) protein is Alkaline proteinase (ALP).